The chain runs to 282 residues: Bis(5'-nucleosyl)-tetraphosphatase, symmetrical (282 aa).

Belongs to the Ap4A hydrolase family.

It carries out the reaction P(1),P(4)-bis(5'-adenosyl) tetraphosphate + H2O = 2 ADP + 2 H(+). Functionally, hydrolyzes diadenosine 5',5'''-P1,P4-tetraphosphate to yield ADP. The sequence is that of Bis(5'-nucleosyl)-tetraphosphatase, symmetrical from Escherichia coli O127:H6 (strain E2348/69 / EPEC).